The primary structure comprises 180 residues: Threonylcarbamoyl-AMP synthase (180 aa).

One can recognise a YrdC-like domain in the interval 1 to 180 (MRARALQHFL…DLITGAIVRP (180 aa)).

The protein belongs to the SUA5 family. TsaC subfamily.

Its subcellular location is the cytoplasm. The enzyme catalyses L-threonine + hydrogencarbonate + ATP = L-threonylcarbamoyladenylate + diphosphate + H2O. Functionally, required for the formation of a threonylcarbamoyl group on adenosine at position 37 (t(6)A37) in tRNAs that read codons beginning with adenine. Catalyzes the conversion of L-threonine, HCO(3)(-)/CO(2) and ATP to give threonylcarbamoyl-AMP (TC-AMP) as the acyladenylate intermediate, with the release of diphosphate. This Methylobacillus flagellatus (strain ATCC 51484 / DSM 6875 / VKM B-1610 / KT) protein is Threonylcarbamoyl-AMP synthase.